The chain runs to 463 residues: Movement protein TGB1 (463 aa).

The tract at residues 1–126 (MESGFNGSRP…RIPEEGGGGL (126 aa)) is disordered. 2 nucleolar localization signal regions span residues 11-16 (HRVKKD) and 37-52 (FRKNNNNKTQNWKPRS). The segment covering 23–49 (PVNTQGSSGTTGNAFRKNNNNKTQNWK) has biased composition (polar residues). The segment covering 58 to 67 (NEGDQTKNNK) has biased composition (basic and acidic residues). Polar residues predominate over residues 83–95 (RPESSTGESVKQQ). Residues 96–107 (SEPHRVLEDKKQ) are compositionally biased toward basic and acidic residues. The 142-residue stretch at 185–326 (CNLSQRESEV…WLQVPVIFQS (142 aa)) folds into the (+)RNA virus helicase ATP-binding domain. An ATP-binding site is contributed by 215-222 (GVPGSGKT). Residues 327–463 (LTSRRFGKAT…QPQTDRYGPE (137 aa)) enclose the (+)RNA virus helicase C-terminal domain.

It belongs to the virgaviridae/benyvirus TGB1 movement protein family. In terms of assembly, homooligomer. TGB1-TGB3-TGB2 complex formation is enhanced by ATP hydrolysis. Interacts with the suppressor of RNA silencing (via N-terminus). Interacts (via N-terminus) with host importin IMPA1. It depends on Mg(2+) as a cofactor.

The protein localises to the host cell junction. Its subcellular location is the host plasmodesma. The protein resides in the host nucleus. It is found in the host cytoplasm. It localises to the host nucleolus. The protein localises to the host cytoskeleton. It carries out the reaction ATP + H2O = ADP + phosphate + H(+). Its function is as follows. Participates in the transport of viral genome to neighboring plant cells directly through plasmodesmata, without any budding. Multifunctional movement protein with RNA-binding, ATPase and helicase activities. Engages in homologous interactions leading to the formation of a ribonucleoprotein complex containing plus-sense viral RNAs (vRNPs). ATPase activity is probably required for vRNPs movement complex assembly. Intracellular delivery of TGBp1-containing vRNPs to plasmodesmata is facilitated by TGBp2 and TGBp3. The protein is Movement protein TGB1 of Potato mop-top virus (isolate Potato/Sweden/Sw) (PMTV).